Reading from the N-terminus, the 352-residue chain is RING finger protein 39 (352 aa).

The RING-type zinc-finger motif lies at 20–67 (CPLCGGPFEDPVLLACEHSFCRSCLARCWGSPAAPGSEEATPSCPCCG). The disordered stretch occupies residues 98-118 (PGARTGRRRGGRIPTMGCLDP). In terms of domain architecture, B30.2/SPRY spans 142 to 352 (EDLPEDYPVV…APLRIVPGEA (211 aa)).

Expressed in the hippocampus. Expression is rapidly up-regulated in granule cells of the dentate gyrus after LTP induction.

The protein localises to the cytoplasm. It catalyses the reaction S-ubiquitinyl-[E2 ubiquitin-conjugating enzyme]-L-cysteine + [acceptor protein]-L-lysine = [E2 ubiquitin-conjugating enzyme]-L-cysteine + N(6)-ubiquitinyl-[acceptor protein]-L-lysine.. Its pathway is protein modification; protein ubiquitination. Functionally, plays an inhibitory role in anti-RNA viral innate immunity by targeting the adapter DDX3X and promoting its 'Lys-48'-linked polyubiquitination. Alternatively, enhances the cGAS-STING pathway activation by promoting 'Lys-63'-linked ubiquitination of STING1, facilitating the STING1-TBK1 complex formation and STING1 activation. The polypeptide is RING finger protein 39 (Rnf39) (Rattus norvegicus (Rat)).